We begin with the raw amino-acid sequence, 175 residues long: Gamma-crystallin B (175 aa).

Beta/gamma crystallin 'Greek key' domains are found at residues Gly2–Ser40 and Gly41–Pro83. Lys3 carries an N-linked (Glc) (glycation) lysine; in vitro glycan. Cys19 and Cys23 are disulfide-bonded. The interval Gln84–Thr88 is connecting peptide. Beta/gamma crystallin 'Greek key' domains lie at Phe89 to Glu129 and Gly130 to Met172.

This sequence belongs to the beta/gamma-crystallin family.

Its function is as follows. Crystallins are the dominant structural components of the vertebrate eye lens. In Bos taurus (Bovine), this protein is Gamma-crystallin B (CRYGB).